Consider the following 190-residue polypeptide: 2-phospho-L-lactate guanylyltransferase (190 aa).

This sequence belongs to the CofC family. In terms of assembly, homodimer.

It carries out the reaction (2S)-2-phospholactate + GTP + H(+) = (2S)-lactyl-2-diphospho-5'-guanosine + diphosphate. The protein operates within cofactor biosynthesis; coenzyme F420 biosynthesis. In terms of biological role, guanylyltransferase that catalyzes the activation of (2S)-2-phospholactate (2-PL) as (2S)-lactyl-2-diphospho-5'-guanosine, via the condensation of 2-PL with GTP. It is involved in the biosynthesis of coenzyme F420, a hydride carrier cofactor. The polypeptide is 2-phospho-L-lactate guanylyltransferase (Methanopyrus kandleri (strain AV19 / DSM 6324 / JCM 9639 / NBRC 100938)).